We begin with the raw amino-acid sequence, 589 residues long: Chromodomain Y-like protein (589 aa).

Residues 1–10 (MGLGSSQPST) are compositionally biased toward polar residues. Residues 1 to 57 (MGLGSSQPSTKEAEPCTLQEKEEHPVDDTRQQNNAVPATVSDPDQVSPAVQDAETQV) form a disordered region. The span at 11–30 (KEAEPCTLQEKEEHPVDDTR) shows a compositional bias: basic and acidic residues. Residues 55 to 115 (TQVESIVDKR…RHNERQKEGT (61 aa)) form the Chromo domain. Positions 55-300 (TQVESIVDKR…TIQTSVTGVT (246 aa)) are interaction with EZH2. A Phosphoserine modification is found at Ser-82. The disordered stretch occupies residues 110-155 (RQKEGTLARANRASPSNARKQISRSTHSALSKTNPKALVVGKDHES). Low complexity predominate over residues 117–128 (ARANRASPSNAR). N6,N6,N6-trimethyllysine; by EHMT2; alternate is present on Lys-129. Residue Lys-129 is modified to N6,N6-dimethyllysine; by EHMT2; alternate. Lys-129 bears the N6-methyllysine; by EHMT2; alternate mark. Over residues 132-143 (SRSTHSALSKTN) the composition is skewed to polar residues. Ser-164, Ser-195, and Ser-210 each carry phosphoserine. A disordered region spans residues 202-224 (SIDGFHGESPEKLDQGAEDTVTP). The span at 206-216 (FHGESPEKLDQ) shows a compositional bias: basic and acidic residues. Residues 353 to 585 (SENNSLNPEV…DSMLKYLQRK (233 aa)) are acetyl-CoA-binding domain.

As to quaternary structure, forms multimers and multimerization is required for stable binding to chromatin. Interacts with HDAC1 and HDAC2 via its C-terminal acetyl-CoA-binding domain. Interacts with EZH2, EED, SUZ12, REST, EHMT1 and EHMT2. Part of a complex containing at least CDYL, REST, WIZ, SETB1, EHMT1 and EHMT2. Part of a complex containing at least CDYL, MIER1, MIER2, HDAC1 and HDAC2. Interacts with CHAF1A and CHAF1B; bridging the CAF-1 complex to the MCM2-7 (MCM) complex. Interacts with MCM3 and MCM5; bridging the CAF-1 complex to the MCM2-7 (MCM) complex. Recruited to Xist RNA-coated X chromosome. Interacts with EHMT2 and PRDM9; interaction only takes place when PRDM9 is bound to hotspot DNA. As to expression, expressed in the brain, with expression in the hippocampal dentate gyrus, CA1, striatum and cortex (at protein level). Expressed in the prelimbic cortex.

Its subcellular location is the nucleus. It is found in the chromosome. The enzyme catalyses 3-hydroxybutanoyl-CoA = (2E)-butenoyl-CoA + H2O. In terms of biological role, chromatin reader protein that recognizes and binds histone H3 trimethylated at 'Lys-9', dimethylated at 'Lys-27' and trimethylated at 'Lys-27' (H3K9me3, H3K27me2 and H3K27me3, respectively). Part of multimeric repressive chromatin complexes, where it is required for transmission and restoration of repressive histone marks, thereby preserving the epigenetic landscape. Required for chromatin targeting and maximal enzymatic activity of Polycomb repressive complex 2 (PRC2); acts as a positive regulator of PRC2 activity by bridging the pre-existing histone H3K27me3 and newly recruited PRC2 on neighboring nucleosomes. Acts as a corepressor for REST by facilitating histone-lysine N-methyltransferase EHMT2 recruitment and H3K9 dimethylation at REST target genes for repression. Involved in X chromosome inactivation in females: recruited to Xist RNA-coated X chromosome and facilitates propagation of H3K9me2 by anchoring EHMT2. Promotes EZH2 accumulation and H3K27me3 methylation at DNA double strand breaks (DSBs), thereby facilitating transcriptional repression at sites of DNA damage and homology-directed repair of DSBs. Required for neuronal migration during brain development by repressing expression of RHOA. By repressing the expression of SCN8A, contributes to the inhibition of intrinsic neuronal excitability and epileptogenesis. In addition to acting as a chromatin reader, acts as a hydro-lyase. Shows crotonyl-coA hydratase activity by mediating the conversion of crotonyl-CoA ((2E)-butenoyl-CoA) to beta-hydroxybutyryl-CoA (3-hydroxybutanoyl-CoA), thereby acting as a negative regulator of histone crotonylation. Histone crotonylation is required during spermatogenesis; down-regulation of histone crotonylation by CDYL regulates the reactivation of sex chromosome-linked genes in round spermatids and histone replacement in elongating spermatids. By regulating histone crotonylation and trimethylation of H3K27, may be involved in stress-induced depression-like behaviors, possibly by regulating VGF expression. Displays acetyltransferase activity toward tubulin in vitro; such activity is however unsure in vivo and additional evidences would be required to confirm this result. Functionally, not able to recognize and bind histone H3K9me3, histone H3K27me2 and histone H3K27me3, due to the presence of a N-terminal extension that inactivates the chromo domain. The chain is Chromodomain Y-like protein from Rattus norvegicus (Rat).